We begin with the raw amino-acid sequence, 587 residues long: Phosphatidylinositol-3-phosphatase SAC1 (587 aa).

Residues 1 to 520 are Cytoplasmic-facing; it reads MAATAYEHLK…SPLSVPRDWK (520 aa). One can recognise an SAC domain in the interval 122 to 451; that stretch reads LNHVLSTDGF…ANACAKQYAG (330 aa). Positions 452–587 are essential for phosphatidylinositol-4-phosphate phosphatase activity; the sequence is TGALKTDFTR…PRLVQKEKID (136 aa). Lys456 carries the post-translational modification N6-acetyllysine. Residues 521–541 traverse the membrane as a helical segment; it reads FLALPIIMVVAFSMCIICLLM. At 542–548 the chain is on the lumenal side; the sequence is AGDTWTE. The helical transmembrane segment at 549-569 threads the bilayer; that stretch reads TLAYVLFWGVASIGTFFIILY. Residues 570-587 are Cytoplasmic-facing; it reads NGKDFVDAPRLVQKEKID.

In terms of assembly, interacts with TMEM39A. Interacts with SEC23A and SEC24A; this interaction is reduced in the absence of TMEM39A. Interacts with PLEKHA3 and VAPA and/or VAPB to form a ternary complex. In terms of tissue distribution, detected in spleen, lung, liver, skeletal muscle, kidney, testis and in cerebellar Purkinje cells (at protein level). Ubiquitous. Highly expressed in brain, spleen, liver and kidney.

It is found in the endoplasmic reticulum membrane. The protein localises to the golgi apparatus membrane. It catalyses the reaction a 1,2-diacyl-sn-glycero-3-phospho-(1D-myo-inositol-3-phosphate) + H2O = a 1,2-diacyl-sn-glycero-3-phospho-(1D-myo-inositol) + phosphate. It carries out the reaction a 1,2-diacyl-sn-glycero-3-phospho-(1D-myo-inositol 4-phosphate) + H2O = a 1,2-diacyl-sn-glycero-3-phospho-(1D-myo-inositol) + phosphate. Its function is as follows. Phosphoinositide phosphatase which catalyzes the hydrolysis of phosphatidylinositol 4-phosphate (PtdIns(4)P), phosphatidylinositol 3-phosphate (PtdIns(3)P) and has low activity towards phosphatidylinositol-3,5-bisphosphate (PtdIns(3,5)P2). Shows a very robust PtdIns(4)P phosphatase activity when it binds PtdIns(4)P in a 'cis' configuration in the cellular environment, with much less activity seen when it binds PtdIns(4)P in 'trans' configuration. PtdIns(4)P phosphatase activity (when it binds PtdIns(4)P in 'trans' configuration) is enhanced in the presence of PLEKHA3. This chain is Phosphatidylinositol-3-phosphatase SAC1 (Sacm1l), found in Rattus norvegicus (Rat).